The chain runs to 707 residues: SEC14-like protein 5 (707 aa).

Positions 3–175 (QKYQSPVRVY…YLNELISQGI (173 aa)) constitute a PRELI/MSF1 domain. Polar residues predominate over residues 201 to 211 (RSNQAEQTASQ). Residues 201 to 232 (RSNQAEQTASQGPCKADAGSHSLAAEPSTPDT) are disordered. In terms of domain architecture, CRAL-TRIO spans 315 to 491 (PPRVLEEYYA…FLGGECVCNI (177 aa)). One can recognise a GOLD domain in the interval 518–667 (TETIYQSSCV…KCKLMYYFEV (150 aa)). Positions 686–695 (FSQLSGVTNT) are enriched in polar residues. The segment at 686 to 707 (FSQLSGVTNTSSKSHSSSLISR) is disordered. Positions 696–707 (SSKSHSSSLISR) are enriched in low complexity.

The chain is SEC14-like protein 5 (sec14l1) from Xenopus tropicalis (Western clawed frog).